A 630-amino-acid polypeptide reads, in one-letter code: Succinate dehydrogenase [ubiquinone] flavoprotein subunit, mitochondrial (630 aa).

Residues 1-31 (MWRGCVSRGLRSLSKGKGSSSSAPVSAAARL) constitute a mitochondrion transit peptide. FAD contacts are provided by residues 52-57 (GAGGAG), 75-90 (TKLFPTRSHTVAAQGG), and Asp-260. A Tele-8alpha-FAD histidine modification is found at His-83. Substrate-binding residues include His-281 and Thr-293. The active-site Proton acceptor is the Arg-325. His-392 contacts substrate. Glu-426 provides a ligand contact to FAD. Arg-437 contributes to the substrate binding site. 442–443 (SL) contacts FAD.

Belongs to the FAD-dependent oxidoreductase 2 family. FRD/SDH subfamily. Component of complex II composed of eight subunits in plants: four classical SDH subunits SDH1, SDH2, SDH3 and SDH4 (a flavoprotein (FP), an iron-sulfur protein (IP), and a cytochrome b composed of a large and a small subunit.), as well as four subunits unknown in mitochondria from bacteria and heterotrophic eukaryotes. FAD serves as cofactor.

Its subcellular location is the mitochondrion inner membrane. The enzyme catalyses a quinone + succinate = fumarate + a quinol. Its pathway is carbohydrate metabolism; tricarboxylic acid cycle; fumarate from succinate (eukaryal route): step 1/1. Flavoprotein (FP) subunit of succinate dehydrogenase (SDH) that is involved in complex II of the mitochondrial electron transport chain and is responsible for transferring electrons from succinate to ubiquinone (coenzyme Q). The polypeptide is Succinate dehydrogenase [ubiquinone] flavoprotein subunit, mitochondrial (SDH1) (Oryza sativa subsp. japonica (Rice)).